The primary structure comprises 233 residues: uncharacterized protein (233 aa).

A run of 6 helical transmembrane segments spans residues V7–Y27, Y36–P56, M62–A82, L119–M139, P159–V179, and I188–I208.

Its subcellular location is the cell membrane. This is an uncharacterized protein from Methanocaldococcus jannaschii (strain ATCC 43067 / DSM 2661 / JAL-1 / JCM 10045 / NBRC 100440) (Methanococcus jannaschii).